The chain runs to 562 residues: Malate synthase (562 aa).

The active-site Proton acceptor is the Arg-177. Residue Asp-463 is the Proton donor of the active site. The Microbody targeting signal signature appears at 560-562 (SRL).

The protein belongs to the malate synthase family.

It localises to the glyoxysome. The catalysed reaction is glyoxylate + acetyl-CoA + H2O = (S)-malate + CoA + H(+). Its pathway is carbohydrate metabolism; glyoxylate cycle; (S)-malate from isocitrate: step 2/2. Functionally, does not seem to be essential for lipid utilization and gluconeogenesis in seedlings. This is Malate synthase from Arabidopsis thaliana (Mouse-ear cress).